We begin with the raw amino-acid sequence, 419 residues long: L-rhamnose isomerase (419 aa).

3 residues coordinate Mn(2+): histidine 262, aspartate 294, and aspartate 296.

This sequence belongs to the rhamnose isomerase family. In terms of assembly, homotetramer. Mn(2+) serves as cofactor.

It localises to the cytoplasm. It catalyses the reaction L-rhamnopyranose = L-rhamnulose. The protein operates within carbohydrate degradation; L-rhamnose degradation; glycerone phosphate from L-rhamnose: step 1/3. Its function is as follows. Catalyzes the interconversion of L-rhamnose and L-rhamnulose. The protein is L-rhamnose isomerase of Citrobacter koseri (strain ATCC BAA-895 / CDC 4225-83 / SGSC4696).